The sequence spans 270 residues: Transcriptional regulator BrlR (270 aa).

A 3',3'-c-di-GMP-binding site is contributed by Met1. Positions 1-71 (MLTIGQLARI…LEAIDRLKRD (71 aa)) constitute an HTH merR-type domain. Positions 4–23 (IGQLARIFEISTKTLRHYDA) form a DNA-binding region, H-T-H motif. Positions 31, 34, 35, 40, 67, 70, 86, and 270 each coordinate 3',3'-c-di-GMP. The tract at residues 120–270 (MHARIVERPA…SQVDLYIPIY (151 aa)) is involved in effector-binding, probably including pyocyanine-binding.

As to quaternary structure, monomer. Homodimer; dimer formation enhanced in the presence of the second messenger, cyclic di-GMP (c-di-GMP). Homotetramer; dimer of dimers, arranged in a head-to-tail fashion, which may reduce DNA-binding ability. Conformational changes upon binding c-di-GMP or pyocyanine may facilitate DNA binding.

Its function is as follows. Transcriptional regulator. Responsive to the second messenger cyclic di-GMP (c-di-GMP) and to the virulence factor pyocyanine, which both enhance gene expression and promoter DNA binding of BrlR. Activates expression of operons encoding the multidrug efflux pumps MexAB-OprM and MexEF-OprN and several ABC transport systems, acting by direct binding to their respective promoters. Also acts as a repressor of the two component regulatory system, PhoPQ. Binds to promoter of its own gene. Contributes to the antimicrobial tolerance exhibited by biofilms, acting, at least in part, by activating expression of multidrug efflux pumps and ABC transporters. In Pseudomonas aeruginosa (strain ATCC 15692 / DSM 22644 / CIP 104116 / JCM 14847 / LMG 12228 / 1C / PRS 101 / PAO1), this protein is Transcriptional regulator BrlR.